Here is a 332-residue protein sequence, read N- to C-terminus: 2,3-diketo-L-gulonate reductase (332 aa).

His-44 functions as the Proton donor in the catalytic mechanism. Residues Ile-168–Ser-174, Trp-224–Lys-225, and Gly-304–Glu-306 contribute to the NAD(+) site.

This sequence belongs to the LDH2/MDH2 oxidoreductase family. DlgD subfamily. As to quaternary structure, homodimer.

It is found in the cytoplasm. It catalyses the reaction 3-dehydro-L-gulonate + NAD(+) = 2,3-dioxo-L-gulonate + NADH + H(+). The enzyme catalyses 3-dehydro-L-gulonate + NADP(+) = 2,3-dioxo-L-gulonate + NADPH + H(+). Its function is as follows. Catalyzes the reduction of 2,3-diketo-L-gulonate in the presence of NADH, to form 3-keto-L-gulonate. In Escherichia coli O1:K1 / APEC, this protein is 2,3-diketo-L-gulonate reductase.